The following is a 31-amino-acid chain: Cytochrome b6-f complex subunit 6 (31 aa).

The chain crosses the membrane as a helical span at residues 4-24; it reads ITSYFGFLLAALTITSALLIG.

This sequence belongs to the PetL family. The 4 large subunits of the cytochrome b6-f complex are cytochrome b6, subunit IV (17 kDa polypeptide, PetD), cytochrome f and the Rieske protein, while the 4 small subunits are PetG, PetL, PetM and PetN. The complex functions as a dimer.

It localises to the plastid. Its subcellular location is the chloroplast thylakoid membrane. Component of the cytochrome b6-f complex, which mediates electron transfer between photosystem II (PSII) and photosystem I (PSI), cyclic electron flow around PSI, and state transitions. PetL is important for photoautotrophic growth as well as for electron transfer efficiency and stability of the cytochrome b6-f complex. The chain is Cytochrome b6-f complex subunit 6 from Piper cenocladum (Ant piper).